The primary structure comprises 526 residues: Arginine/ornithine antiporter ArcD1 (526 aa).

The next 14 membrane-spanning stretches (helical) occupy residues 8-28, 41-61, 88-108, 128-148, 160-180, 220-240, 255-275, 297-317, 354-374, 378-398, 407-427, 428-448, 466-486, and 495-515; these read GIGLAALVAIIVSGAIGGGVF, GGVVISWIVIGFGILMLVLSL, FISGWGYWLSAWAGNIAFAVL, LTILSVIVVSIVSWGLTLLVM, IVLVAKLIPLFVFVIAGIVTF, VKGSLMVMIWVFVGIEGAAMM, IFGLIALLVIYILLSLLPFGF, VGGWGGSLMAIGLVISLLGAW, LLLTQLIVQIFLIVTYFVADA, FVYLCTAVIMICYALVGLYLF, TSNIIIGFIAAAFQILALYYS, GWQFVWLSLILYAVGFILYAL, FILTVLGILAVFGVYGNWLGL, and NTLLVAVVPLIVVTFIVYFVV.

The protein belongs to the amino acid-polyamine-organocation (APC) superfamily. Basic amino acid/polyamine antiporter (APA) (TC 2.A.3.2) family.

It localises to the cell membrane. The catalysed reaction is L-ornithine(in) + L-arginine(out) = L-ornithine(out) + L-arginine(in). Its function is as follows. Catalyzes electroneutral exchange between L-arginine and L-ornithine. Can also efficiently translocate L-histidine and L-lysine. ArcD1 is the main L-arginine/L-ornithine exchanger in the arginine deiminase (ADI) pathway. This Lactococcus lactis subsp. cremoris (strain MG1363) protein is Arginine/ornithine antiporter ArcD1.